The following is a 104-amino-acid chain: MNSVPASAYLTLAIILFCIGLFGALTKRNTVIVLVCMELMLNAANLNLVAFSKLGFFPNLTGQIFSLFTMSVAAAEAAVGLAILIALYRNRTTVNIDEMDKLKG.

Transmembrane regions (helical) follow at residues 4–24 (VPAS…LFGA), 31–51 (VIVL…LVAF), and 67–87 (LFTM…LIAL).

Belongs to the complex I subunit 4L family. As to quaternary structure, NDH-1 is composed of 14 different subunits. Subunits NuoA, H, J, K, L, M, N constitute the membrane sector of the complex.

The protein resides in the cell membrane. It catalyses the reaction a quinone + NADH + 5 H(+)(in) = a quinol + NAD(+) + 4 H(+)(out). Functionally, NDH-1 shuttles electrons from NADH, via FMN and iron-sulfur (Fe-S) centers, to quinones in the respiratory chain. The immediate electron acceptor for the enzyme in this species is believed to be a menaquinone. Couples the redox reaction to proton translocation (for every two electrons transferred, four hydrogen ions are translocated across the cytoplasmic membrane), and thus conserves the redox energy in a proton gradient. The sequence is that of NADH-quinone oxidoreductase subunit K from Bacillus cytotoxicus (strain DSM 22905 / CIP 110041 / 391-98 / NVH 391-98).